Here is a 1020-residue protein sequence, read N- to C-terminus: MGVPSFYRWLAEKYPLLVADVIEEEPVEIEGIKIPVDTSKPNPNNLEYDNLYLDMNGIIHPCFHPEDRPSPTTFEEVFQCMFDYIDRLFVMVRPRKLLYMAIDGVAPRAKMNQQRSRRFRSAKDASDAAAEEERLREEFEREGRRLPPKVDSQVFDSNVITPGTEFMGVLSIALQYYVHLRLNHDVGWKNIKVILSDANVPGEGEHKIMSYIRLQRNLPGFDPNTRHCLYGLDADLIMLGLATHEVHFSILREVVYTPGQQERCFLCGQMGHFASNCEGKPKKRAGESDEKGDGNDFVKKPYQFLHIWVLREYLELEMRIPNPPFEIDLERIVDDFIFICFFVGNDFLPHMPTLEIREGAINLLMAVYKKEFRSFDGYLTDGCKPNLKRVEQFIQAVGSFEDKIFQKRAMQHQRQAERVKRDKAGKATKRMDDEAPTVQPDLVPVARFSGSRLASAPTPSPFQSNDGRSAPHQKVRRLSPGSSVGAAIVDVENSLESDERENKEELKTKLKELIREKSDAFNSDTTEEDKVKLGQPGWRERYYEEKFSVVTPEEMERVRKDVVLKYTEGLCWVMHYYMEGVCSWQWFYPYHYAPFASDLKDLGEMDIKFELGTPFKPFNQLLGVFPAASSHALPERYRTLMTDPNSPIIDFYPTDFEVDMNGKRFSWQGIAKLPFIDERRLLEAVSEVEFTLTDEEKRRNSRMCDMLFIATSHRLAELVFSLDNHCRQLSARERVDFKVKIKPKLSDGMNGYLTPCSGETHPPVFRSPMEGMEDILTNQVICCIYRLPDAHEHITRPPPGVIFPKKTVDIGDLKPPPALWHEDNGRRPMHNNHGMHNNHGMHNNQGRQNPPGSVSGRHLGNAAHRLVSNSLQMGTDRYQTPTDVPAPGYGYNPPQYVPPIPYQHGGYMAPPGAQGYAQPAPYQNRGGYQPRGPSGRFPSEPYQSQSREGQHASRGGGYSGNHQNQHQQQQWHGQGGSEQNNPRGYNGQHHHQQGGDHDRRGRGRGSHHHHDQGGNPRHRY.

A disordered region spans residues 113 to 144 (QQRSRRFRSAKDASDAAAEEERLREEFEREGR). The span at 121–144 (SAKDASDAAAEEERLREEFEREGR) shows a compositional bias: basic and acidic residues. The CCHC-type zinc-finger motif lies at 262-279 (ERCFLCGQMGHFASNCEG). Disordered stretches follow at residues 411–440 (QHQR…TVQP) and 452–483 (RLAS…PGSS). The span at 414 to 433 (RQAERVKRDKAGKATKRMDD) shows a compositional bias: basic and acidic residues. The stretch at 487–523 (AIVDVENSLESDERENKEELKTKLKELIREKSDAFNS) forms a coiled coil. Residues 831-844 (NNHGMHNNHGMHNN) show a composition bias toward low complexity. Disordered stretches follow at residues 831 to 859 (NNHG…GRHL), 875 to 897 (TDRY…PQYV), and 911 to 1020 (PGAQ…RHRY). Composition is skewed to low complexity over residues 911–923 (PGAQ…APYQ) and 960–972 (GNHQ…QQWH). A compositionally biased stretch (basic residues) spans 1000 to 1020 (RGRGRGSHHHHDQGGNPRHRY).

Belongs to the 5'-3' exonuclease family. XRN2/RAT1 subfamily. Expressed in roots, leaves, stems and flowers.

The protein resides in the nucleus. Its function is as follows. Possesses 5'-&gt;3' exoribonuclease activity. Acts as an endogenous post-transcriptional gene silencing (PTGS) suppressor. Degrades miRNA-derived loops, excised during miRNA maturation in the nucleus. Required for proper development. Involved in pre-rRNA processing. Involved with XRN2 in the 5'-end exonucleolytic processing of 5.8S and 25S rRNAs. Contributes with XRN2 to polyadenylation-dependent nuclear RNA surveillance. Involved in the degradation of aberrant polyadenylated pre-rRNA through 5'-end processing. The chain is 5'-3' exoribonuclease 3 from Arabidopsis thaliana (Mouse-ear cress).